The primary structure comprises 79 residues: Acyl carrier protein (79 aa).

The Carrier domain occupies 2–77; it reads ENIEQRVKKI…QAIDYVNAHL (76 aa). Serine 37 is modified (O-(pantetheine 4'-phosphoryl)serine).

It belongs to the acyl carrier protein (ACP) family. 4'-phosphopantetheine is transferred from CoA to a specific serine of apo-ACP by AcpS. This modification is essential for activity because fatty acids are bound in thioester linkage to the sulfhydryl of the prosthetic group.

The protein localises to the cytoplasm. The protein operates within lipid metabolism; fatty acid biosynthesis. Carrier of the growing fatty acid chain in fatty acid biosynthesis. The chain is Acyl carrier protein from Azoarcus sp. (strain BH72).